Here is a 425-residue protein sequence, read N- to C-terminus: Gamma-glutamyl phosphate reductase (425 aa).

Belongs to the gamma-glutamyl phosphate reductase family.

The protein resides in the cytoplasm. The enzyme catalyses L-glutamate 5-semialdehyde + phosphate + NADP(+) = L-glutamyl 5-phosphate + NADPH + H(+). The protein operates within amino-acid biosynthesis; L-proline biosynthesis; L-glutamate 5-semialdehyde from L-glutamate: step 2/2. Catalyzes the NADPH-dependent reduction of L-glutamate 5-phosphate into L-glutamate 5-semialdehyde and phosphate. The product spontaneously undergoes cyclization to form 1-pyrroline-5-carboxylate. The sequence is that of Gamma-glutamyl phosphate reductase from Aromatoleum aromaticum (strain DSM 19018 / LMG 30748 / EbN1) (Azoarcus sp. (strain EbN1)).